A 149-amino-acid chain; its full sequence is Small ribosomal subunit protein uS19 (149 aa).

The protein belongs to the universal ribosomal protein uS19 family.

Functionally, protein S19 forms a complex with S13 that binds strongly to the 16S ribosomal RNA. The protein is Small ribosomal subunit protein uS19 of Methanopyrus kandleri (strain AV19 / DSM 6324 / JCM 9639 / NBRC 100938).